The following is a 194-amino-acid chain: MNKPSKFALALAFAAVTASGVASAQTVDNWRNPYGNVWKNGTNELCWRDAFWTPATGIPGCDGVPVAQQPKEKPAPMAAKVVFNADTFFDFDKSTLKPEGRQLLDQVAQQARAIDLETIIAVGNTDSIGTEAYNMKLSERRAASVKAYLVSKGIDPNRIYTEGKGKLNPIASNKTAEGRARNRRVEIEIVGSRK.

A signal peptide spans 1 to 24 (MNKPSKFALALAFAAVTASGVASA). Residues 30–38 (WRNPYGNVW) traverse the membrane as a beta stranded segment. The 117-residue stretch at 77–193 (MAAKVVFNAD…RVEIEIVGSR (117 aa)) folds into the OmpA-like domain.

The protein belongs to the outer membrane OOP (TC 1.B.6) superfamily.

The protein resides in the cell outer membrane. In terms of biological role, structural protein that may protect the integrity of the bacterium. The protein is Outer membrane protein A of Bordetella avium.